Here is a 59-residue protein sequence, read N- to C-terminus: Conotoxin Ts-03 (59 aa).

The first 19 residues, 1 to 19, serve as a signal peptide directing secretion; that stretch reads MRCLPVFIILLLLIPSAAS. The propeptide occupies 20–47; the sequence is VAQPKTKDDVALASFYDNAKRTLQRHWA.

It belongs to the conotoxin T superfamily. Post-translationally, contains 2 disulfide bonds that can be either 'C1-C3, C2-C4' or 'C1-C4, C2-C3', since these disulfide connectivities have been observed for conotoxins with cysteine framework V (for examples, see AC P0DQQ7 and AC P81755). Expressed by the venom duct.

It is found in the secreted. The sequence is that of Conotoxin Ts-03 from Conus tessulatus (Tessellate cone).